The primary structure comprises 198 residues: MLLNDREIKELIDKKEIIIEPFSYEQIQPASIDLRLGNRFRIFRKGEIEVIDPKDFKDELIKIEQDENKIIEKYKYTDVIITENPFIIYPGDFVLASIYEYIKLPRYIAAQLHGKSSIARLGLIIHTSAGWIDPGYEGHLTLEIFNTNNVPIKLYPKMKIAQLQLFRINPVERDYKEKGGKYYKEKGATSSEIWKDFI.

Residues 115–120 (KSSIAR), aspartate 133, 141–143 (TLE), glutamine 162, tyrosine 175, and lysine 184 each bind dCTP. Glutamate 143 serves as the catalytic Proton donor/acceptor.

Belongs to the dCTP deaminase family. In terms of assembly, homotrimer.

It carries out the reaction dCTP + 2 H2O = dUMP + NH4(+) + diphosphate. It functions in the pathway pyrimidine metabolism; dUMP biosynthesis; dUMP from dCTP: step 1/1. Its function is as follows. Bifunctional enzyme that catalyzes both the deamination of dCTP to dUTP and the hydrolysis of dUTP to dUMP without releasing the toxic dUTP intermediate. This chain is dCTP deaminase, dUMP-forming, found in Nanoarchaeum equitans (strain Kin4-M).